A 216-amino-acid chain; its full sequence is Ribosomal RNA small subunit methyltransferase G (216 aa).

S-adenosyl-L-methionine is bound by residues Gly81, Phe86, Ala130–Glu131, and Arg144.

This sequence belongs to the methyltransferase superfamily. RNA methyltransferase RsmG family.

Its subcellular location is the cytoplasm. The catalysed reaction is guanosine(527) in 16S rRNA + S-adenosyl-L-methionine = N(7)-methylguanosine(527) in 16S rRNA + S-adenosyl-L-homocysteine. In terms of biological role, specifically methylates the N7 position of guanine in position 527 of 16S rRNA. The polypeptide is Ribosomal RNA small subunit methyltransferase G (Rhodospirillum centenum (strain ATCC 51521 / SW)).